A 227-amino-acid chain; its full sequence is MAYPMQLGLQDATSPIMEELTDFHDHTLMIVFLISTLVLYIISMMLTTKLTHTSTMDAQEVETIWTVLPAVILVMIALPSLRILYMMDEINDPYLTVKTMGHQWYWSYEYTDYEDLMFDSYMIATSDLKPGEFRLLEVDNRVVLPMELPIRMLVSSEDVLHSWAVPSLGLKTDAIPGRLNQATLVSSRPGLFYGQCSEICGANHSFMPIVLEMVPLKQFESWASSMT.

The Mitochondrial intermembrane portion of the chain corresponds to 1-14 (MAYPMQLGLQDATS). The helical transmembrane segment at 15-45 (PIMEELTDFHDHTLMIVFLISTLVLYIISMM) threads the bilayer. At 46–59 (LTTKLTHTSTMDAQ) the chain is on the mitochondrial matrix side. The chain crosses the membrane as a helical span at residues 60–87 (EVETIWTVLPAVILVMIALPSLRILYMM). Residues 88–227 (DEINDPYLTV…QFESWASSMT (140 aa)) are Mitochondrial intermembrane-facing. Cu cation-binding residues include H161, C196, E198, C200, H204, and M207. Residue E198 coordinates Mg(2+).

This sequence belongs to the cytochrome c oxidase subunit 2 family. In terms of assembly, component of the cytochrome c oxidase (complex IV, CIV), a multisubunit enzyme composed of 14 subunits. The complex is composed of a catalytic core of 3 subunits MT-CO1, MT-CO2 and MT-CO3, encoded in the mitochondrial DNA, and 11 supernumerary subunits COX4I, COX5A, COX5B, COX6A, COX6B, COX6C, COX7A, COX7B, COX7C, COX8 and NDUFA4, which are encoded in the nuclear genome. The complex exists as a monomer or a dimer and forms supercomplexes (SCs) in the inner mitochondrial membrane with NADH-ubiquinone oxidoreductase (complex I, CI) and ubiquinol-cytochrome c oxidoreductase (cytochrome b-c1 complex, complex III, CIII), resulting in different assemblies (supercomplex SCI(1)III(2)IV(1) and megacomplex MCI(2)III(2)IV(2)). Found in a complex with TMEM177, COA6, COX18, COX20, SCO1 and SCO2. Interacts with TMEM177 in a COX20-dependent manner. Interacts with COX20. Interacts with COX16. Cu cation is required as a cofactor.

The protein localises to the mitochondrion inner membrane. The catalysed reaction is 4 Fe(II)-[cytochrome c] + O2 + 8 H(+)(in) = 4 Fe(III)-[cytochrome c] + 2 H2O + 4 H(+)(out). In terms of biological role, component of the cytochrome c oxidase, the last enzyme in the mitochondrial electron transport chain which drives oxidative phosphorylation. The respiratory chain contains 3 multisubunit complexes succinate dehydrogenase (complex II, CII), ubiquinol-cytochrome c oxidoreductase (cytochrome b-c1 complex, complex III, CIII) and cytochrome c oxidase (complex IV, CIV), that cooperate to transfer electrons derived from NADH and succinate to molecular oxygen, creating an electrochemical gradient over the inner membrane that drives transmembrane transport and the ATP synthase. Cytochrome c oxidase is the component of the respiratory chain that catalyzes the reduction of oxygen to water. Electrons originating from reduced cytochrome c in the intermembrane space (IMS) are transferred via the dinuclear copper A center (CU(A)) of subunit 2 and heme A of subunit 1 to the active site in subunit 1, a binuclear center (BNC) formed by heme A3 and copper B (CU(B)). The BNC reduces molecular oxygen to 2 water molecules using 4 electrons from cytochrome c in the IMS and 4 protons from the mitochondrial matrix. This is Cytochrome c oxidase subunit 2 (MT-CO2) from Cratogeomys bursarius (Plains pocket gopher).